The primary structure comprises 337 residues: uncharacterized protein (337 aa).

An ABC transporter domain is found at 5 to 235 (VEFDNVSRLY…PRTPFVAGFV (231 aa)). 37–44 (GPSGSGKT) contacts ATP.

Belongs to the ABC transporter superfamily.

Functionally, probably part of the ABC transporter complex YdcSTUV. Probably responsible for energy coupling to the transport system. This is an uncharacterized protein from Escherichia coli (strain K12).